We begin with the raw amino-acid sequence, 252 residues long: MDFITNRKFRSTLLCHQNIPINRKIEFENLKDFYTTFNIRPISSENKIDLNNEQENISFYYENLPEPFISTTSAIMKAILYVYAENISNPIRLEQVAKEAFKKLGKYQLQDFLAILEQHFITFIFQGYLKIFETKPHAIATITEKPKTSQFVRYQAKHAHFNNVTNMLSVTNRLNDMIGIPIHEKYILEMLDGTHNIDDIKKGMIEKINSKLLIACDNKGQAVTDPKLLKEFVDYIVNISLEKFRINYLLIG.

This is an uncharacterized protein from Rickettsia prowazekii (strain Madrid E).